Reading from the N-terminus, the 186-residue chain is dCTP deaminase (186 aa).

107–112 (KSTYAR) contacts dCTP. Glu133 acts as the Proton donor/acceptor in catalysis. DCTP-binding residues include Gln152, Tyr166, and Gln176.

Belongs to the dCTP deaminase family. In terms of assembly, homotrimer.

It carries out the reaction dCTP + H2O + H(+) = dUTP + NH4(+). Its pathway is pyrimidine metabolism; dUMP biosynthesis; dUMP from dCTP (dUTP route): step 1/2. Catalyzes the deamination of dCTP to dUTP. In Campylobacter fetus subsp. fetus (strain 82-40), this protein is dCTP deaminase.